The primary structure comprises 183 residues: Guanylate kinase (183 aa).

The Guanylate kinase-like domain occupies 4-182 (GRVVVLTGPS…AITALEAAIF (179 aa)). Position 11-18 (11-18 (GPSGVGKG)) interacts with ATP.

Belongs to the guanylate kinase family.

The protein localises to the cytoplasm. The catalysed reaction is GMP + ATP = GDP + ADP. The enzyme catalyses dZMP + ATP = dZDP + ADP. It participates in purine metabolism. Its function is as follows. Essential for recycling GMP and indirectly, cGMP. Functionally, (Microbial infection) Catalyzes the phosphorylation of dZMP to dZDP, when the bacterium is infected by a phage that produces the substrate for the synthesis of dZTP (2- amino-2'-deoxyadenosine 5'-triphosphate), which is then used by the phage as a DNA polymerase substrate. This Synechococcus sp. (strain ATCC 27144 / PCC 6301 / SAUG 1402/1) (Anacystis nidulans) protein is Guanylate kinase.